The chain runs to 631 residues: Phosphomethylpyrimidine synthase (631 aa).

Substrate contacts are provided by residues Asn-239, Met-268, Tyr-297, His-333, 353–355 (SRG), 394–397 (DGLR), and Glu-433. A Zn(2+)-binding site is contributed by His-437. Tyr-460 is a substrate binding site. His-501 serves as a coordination point for Zn(2+). [4Fe-4S] cluster is bound by residues Cys-581, Cys-584, and Cys-589.

Belongs to the ThiC family. In terms of assembly, homodimer. [4Fe-4S] cluster is required as a cofactor.

It carries out the reaction 5-amino-1-(5-phospho-beta-D-ribosyl)imidazole + S-adenosyl-L-methionine = 4-amino-2-methyl-5-(phosphooxymethyl)pyrimidine + CO + 5'-deoxyadenosine + formate + L-methionine + 3 H(+). Its pathway is cofactor biosynthesis; thiamine diphosphate biosynthesis. Functionally, catalyzes the synthesis of the hydroxymethylpyrimidine phosphate (HMP-P) moiety of thiamine from aminoimidazole ribotide (AIR) in a radical S-adenosyl-L-methionine (SAM)-dependent reaction. The polypeptide is Phosphomethylpyrimidine synthase (Klebsiella pneumoniae (strain 342)).